Reading from the N-terminus, the 438-residue chain is MNHKKLYIDTVGCQMNVNDSERIVTMLQPLGYTQTSRRHEAALILFNTCTVRAGAEECLLQNIANLKNLKRKKPGTLIGVAGCVAQQMGAELLQKFPWVDLVFGTHNLHLVPEMVKDAEAGRRRAETDFLDSSERLDLFPPIEGRKRVSAFVTVMQGCDNFCSYCIVPYVRGREISRRFAEILQEVQDLAAQGLREVVLLGQNVNSYGLKGEEQPSFAELVRAVAAVSGIDRVRFVTSHPKDMSDDLIACFADLAKLCGSLHLPAQAGNNRILKAMNRGYSREHYLETIYKLRQARPEIKITGDMIVGFPGETEAEFEETLSLMEEVRYFDLFSFVYSPRPGTKAAELSDELAKEVKLARLDRLQKLQAVHSRIHNETYVGSTQQVLVEGLAKRHGQVSGRCDSGRIVNLAGSPALIGKLVDVKILEGYANSLLGELL.

One can recognise an MTTase N-terminal domain in the interval 4–120 (KKLYIDTVGC…VPEMVKDAEA (117 aa)). Residues C13, C49, C83, C158, C162, and C165 each coordinate [4Fe-4S] cluster. Residues 144–377 (GRKRVSAFVT…QAVHSRIHNE (234 aa)) form the Radical SAM core domain. The TRAM domain maps to 377 to 438 (ETYVGSTQQV…YANSLLGELL (62 aa)).

It belongs to the methylthiotransferase family. MiaB subfamily. As to quaternary structure, monomer. [4Fe-4S] cluster serves as cofactor.

It is found in the cytoplasm. It catalyses the reaction N(6)-dimethylallyladenosine(37) in tRNA + (sulfur carrier)-SH + AH2 + 2 S-adenosyl-L-methionine = 2-methylsulfanyl-N(6)-dimethylallyladenosine(37) in tRNA + (sulfur carrier)-H + 5'-deoxyadenosine + L-methionine + A + S-adenosyl-L-homocysteine + 2 H(+). Its function is as follows. Catalyzes the methylthiolation of N6-(dimethylallyl)adenosine (i(6)A), leading to the formation of 2-methylthio-N6-(dimethylallyl)adenosine (ms(2)i(6)A) at position 37 in tRNAs that read codons beginning with uridine. This is tRNA-2-methylthio-N(6)-dimethylallyladenosine synthase from Trichlorobacter lovleyi (strain ATCC BAA-1151 / DSM 17278 / SZ) (Geobacter lovleyi).